Consider the following 236-residue polypeptide: NAP1-binding protein 2 (236 aa).

Ser102 is modified (phosphoserine). The SH3 domain occupies 110–171 (IVNQRAVALY…PEEFVSYIQP (62 aa)). A phosphoserine mark is found at Ser196 and Ser235.

In terms of assembly, interacts with PBS2 and PTC1.

Its subcellular location is the cytoplasm. Negatively regulates the high-osmolarity glycerol (HOG) pathway through its negative regulation of the HOG1 kinase activity. Mediates the binding between the PTC1 phosphatase and the PBS2 MAP/ERK kinase (MEK). With PTC1, regulates endoplasmic reticulum inheritance through the cell wall integrity (CWI) MAPK pathway by modulating the MAPK, SLT2. This chain is NAP1-binding protein 2 (NBP2), found in Saccharomyces cerevisiae (strain ATCC 204508 / S288c) (Baker's yeast).